The following is a 636-amino-acid chain: MKYEQLAKDIIQHVGGKENVISVVHCITRLRFKLKDEGKANTDVLKNMDGIVTVMKSGGQYQVVIGNHVPDVYKDVVEIGGFQNQAETETEDEKKYQGLFNKFIDIIASIFTPVLGVLAATGMIKGLNALFLSTGVLEEANGTYQLLHAIGDSLFYFFPIFLGYTAAKKFGATPFIGMAIGASLVYPTLVVLTEGEPLYTLFTGTIFESPVHITFLGIPVILMSYATSVIPIILAAYFASKVEARLRKIIPDVVKTFLVPFFTLLIVVPLTFIVIGPIATWAGQLLGQFTLWVYNLSPIIAGAFLGGFWQVFVIFGLHWGLIPIAINNLVVQGSDPVLAMVFAASFAQIGAVAAVWLKIKQQKVKTLSVPAFISGIFGVTEPAIYGVTLPLKRPFIISCIAAAVGGAIIGLFRSQGYIIGGLGIFGIPSFLHPADGMDAGFWGIVIAVVVAFVLGFILTYLFGLKSGNASDEQTETKAHTSTGTGEKEEISSPFNGSVITLSEIKDEAFSSGALGEGIAIEPSEGKLFSPVSGMVTALYPTHHALGITTDRGAELLIHIGLDTVQLDGKFFTAHTIQGAQVEKGDLLIEFDIKEIKAAGYAVTTPVIVTNHKQYGQLFLTDKQQVNAGDRLLELTR.

The 86-residue stretch at 1 to 86 (MKYEQLAKDI…VEIGGFQNQA (86 aa)) folds into the PTS EIIB type-1 domain. Cys26 serves as the catalytic Phosphocysteine intermediate; for EIIB activity. The next 10 helical transmembrane spans lie at 104–124 (IDIIASIFTPVLGVLAATGMI), 146–166 (LLHAIGDSLFYFFPIFLGYTA), 172–192 (ATPFIGMAIGASLVYPTLVVL), 215–235 (FLGIPVILMSYATSVIPIILA), 258–278 (LVPFFTLLIVVPLTFIVIGPI), 299–319 (IIAGAFLGGFWQVFVIFGLHW), 337–357 (VLAMVFAASFAQIGAVAAVWL), 369–389 (VPAFISGIFGVTEPAIYGVTL), 407–427 (AIIGLFRSQGYIIGGLGIFGI), and 444–464 (IVIAVVVAFVLGFILTYLFGL). In terms of domain architecture, PTS EIIC type-1 spans 105–476 (DIIASIFTPV…GNASDEQTET (372 aa)). Residues 472 to 492 (EQTETKAHTSTGTGEKEEISS) form a disordered region. A PTS EIIA type-1 domain is found at 506-610 (DEAFSSGALG…AVTTPVIVTN (105 aa)). Residue His558 is the Tele-phosphohistidine intermediate; for EIIA activity of the active site.

It is found in the cell membrane. In terms of biological role, the phosphoenolpyruvate-dependent sugar phosphotransferase system (sugar PTS), a major carbohydrate active -transport system, catalyzes the phosphorylation of incoming sugar substrates concomitantly with their translocation across the cell membrane. This system is involved in beta-glucoside transport. The chain is PTS system beta-glucoside-specific EIIBCA component (bglP) from Halalkalibacterium halodurans (strain ATCC BAA-125 / DSM 18197 / FERM 7344 / JCM 9153 / C-125) (Bacillus halodurans).